We begin with the raw amino-acid sequence, 89 residues long: UPF0147 protein YN1551_1489 (89 aa).

The protein belongs to the UPF0147 family.

The protein is UPF0147 protein YN1551_1489 of Saccharolobus islandicus (strain Y.N.15.51 / Yellowstone #2) (Sulfolobus islandicus).